The chain runs to 388 residues: Formate-dependent phosphoribosylglycinamide formyltransferase (388 aa).

Residues 20-21 (EL) and Glu-80 each bind N(1)-(5-phospho-beta-D-ribosyl)glycinamide. ATP is bound by residues Arg-112, Lys-153, 158–163 (SSGKGQ), 193–196 (EEFI), and Glu-201. The 190-residue stretch at 117-306 (RLAFEKLGLR…EFEIHARAIL (190 aa)) folds into the ATP-grasp domain. Glu-265 and Glu-277 together coordinate Mg(2+). Residues Asp-284, Lys-352, and 359 to 360 (RR) contribute to the N(1)-(5-phospho-beta-D-ribosyl)glycinamide site.

The protein belongs to the PurK/PurT family. In terms of assembly, homodimer.

It carries out the reaction N(1)-(5-phospho-beta-D-ribosyl)glycinamide + formate + ATP = N(2)-formyl-N(1)-(5-phospho-beta-D-ribosyl)glycinamide + ADP + phosphate + H(+). It participates in purine metabolism; IMP biosynthesis via de novo pathway; N(2)-formyl-N(1)-(5-phospho-D-ribosyl)glycinamide from N(1)-(5-phospho-D-ribosyl)glycinamide (formate route): step 1/1. Involved in the de novo purine biosynthesis. Catalyzes the transfer of formate to 5-phospho-ribosyl-glycinamide (GAR), producing 5-phospho-ribosyl-N-formylglycinamide (FGAR). Formate is provided by PurU via hydrolysis of 10-formyl-tetrahydrofolate. In Methanococcus maripaludis (strain C5 / ATCC BAA-1333), this protein is Formate-dependent phosphoribosylglycinamide formyltransferase.